Here is a 305-residue protein sequence, read N- to C-terminus: Coiled-coil domain-containing protein 69-A (305 aa).

Gly-2 is lipidated: N-myristoyl glycine. The interval 13–38 (LRKKKRQKAHQGGLTSQELNDLNAKT) is disordered. The span at 25-38 (GLTSQELNDLNAKT) shows a compositional bias: polar residues. Residues 42-281 (NEVLQKIKEY…QREKEQNLYR (240 aa)) adopt a coiled-coil conformation.

Belongs to the CCDC69 family.

It is found in the cytoplasm. The protein localises to the cytoskeleton. It localises to the spindle. Its subcellular location is the midbody. In terms of biological role, may act as a scaffold to regulate the recruitment and assembly of spindle midzone components. The sequence is that of Coiled-coil domain-containing protein 69-A (ccdc69-a) from Xenopus laevis (African clawed frog).